A 243-amino-acid polypeptide reads, in one-letter code: MLILLPAVDVVDGRAVRLVQGKAGSETEYGSALDAALGWQRDGAEWIHLVDLDAAFGRGSNRELLAEVVGKLDVQVELSGGIRDDDSLAAALATGCARVNLGTAALENPQWCARAIGEHGDKVAVGLDVQTIDGQHRLRGRGWETDGGDLWEVLERLERQGCSRYVVTDVTKDGTLGGPNLDLLGAVADRTDAPVIASGGVSSLDDLRAIATLTGRGVEGAIVGKALYAGRFTLPQALAAVAE.

The Proton acceptor role is filled by aspartate 9. The active-site Proton donor is the aspartate 128.

This sequence belongs to the HisA/HisF family.

It localises to the cytoplasm. The enzyme catalyses 1-(5-phospho-beta-D-ribosyl)-5-[(5-phospho-beta-D-ribosylamino)methylideneamino]imidazole-4-carboxamide = 5-[(5-phospho-1-deoxy-D-ribulos-1-ylimino)methylamino]-1-(5-phospho-beta-D-ribosyl)imidazole-4-carboxamide. It catalyses the reaction N-(5-phospho-beta-D-ribosyl)anthranilate = 1-(2-carboxyphenylamino)-1-deoxy-D-ribulose 5-phosphate. Its pathway is amino-acid biosynthesis; L-histidine biosynthesis; L-histidine from 5-phospho-alpha-D-ribose 1-diphosphate: step 4/9. It participates in amino-acid biosynthesis; L-tryptophan biosynthesis; L-tryptophan from chorismate: step 3/5. Involved in both the histidine and tryptophan biosynthetic pathways. This is Phosphoribosyl isomerase A from Mycobacterium avium (strain 104).